Here is a 62-residue protein sequence, read N- to C-terminus: Photosystem II reaction center protein Z (62 aa).

2 helical membrane passes run 8-28 (AVFA…VVFS) and 41-61 (FSGT…NSLI).

The protein belongs to the PsbZ family. In terms of assembly, PSII is composed of 1 copy each of membrane proteins PsbA, PsbB, PsbC, PsbD, PsbE, PsbF, PsbH, PsbI, PsbJ, PsbK, PsbL, PsbM, PsbT, PsbY, PsbZ, Psb30/Ycf12, at least 3 peripheral proteins of the oxygen-evolving complex and a large number of cofactors. It forms dimeric complexes.

The protein resides in the plastid. It localises to the chloroplast thylakoid membrane. In terms of biological role, may control the interaction of photosystem II (PSII) cores with the light-harvesting antenna, regulates electron flow through the 2 photosystem reaction centers. PSII is a light-driven water plastoquinone oxidoreductase, using light energy to abstract electrons from H(2)O, generating a proton gradient subsequently used for ATP formation. The protein is Photosystem II reaction center protein Z of Populus alba (White poplar).